The following is a 319-amino-acid chain: Type II methyltransferase M.RsrI (319 aa).

Residues 1–10 are compositionally biased toward basic residues; sequence MANRSHHNAG. Residues 1-32 are disordered; that stretch reads MANRSHHNAGHRAMNALRKSGQKHSSESQLGS.

This sequence belongs to the N(4)/N(6)-methyltransferase family.

It catalyses the reaction a 2'-deoxyadenosine in DNA + S-adenosyl-L-methionine = an N(6)-methyl-2'-deoxyadenosine in DNA + S-adenosyl-L-homocysteine + H(+). Strongly inhibited by N-ethylmaleimide, inactivated by MgCl(2) or MgSO(4). Its function is as follows. A beta subtype methylase, recognizes the double-stranded sequence 5'-GAATTC-3', methylates A-3 on both strands, and protects the DNA from cleavage by the RsrI endonuclease. This chain is Type II methyltransferase M.RsrI, found in Cereibacter sphaeroides (Rhodobacter sphaeroides).